We begin with the raw amino-acid sequence, 156 residues long: Ribosomal RNA large subunit methyltransferase H (156 aa).

S-adenosyl-L-methionine-binding positions include Leu-73, Gly-104, and 123–128 (LSALTL).

This sequence belongs to the RNA methyltransferase RlmH family. Homodimer.

Its subcellular location is the cytoplasm. The catalysed reaction is pseudouridine(1915) in 23S rRNA + S-adenosyl-L-methionine = N(3)-methylpseudouridine(1915) in 23S rRNA + S-adenosyl-L-homocysteine + H(+). Functionally, specifically methylates the pseudouridine at position 1915 (m3Psi1915) in 23S rRNA. This is Ribosomal RNA large subunit methyltransferase H from Vibrio vulnificus (strain CMCP6).